Here is a 159-residue protein sequence, read N- to C-terminus: Cytochrome c-type biogenesis protein CcmE (159 aa).

The Cytoplasmic segment spans residues Met-1–Arg-8. The chain crosses the membrane as a helical; Signal-anchor for type II membrane protein span at residues Leu-9–Ala-29. Over Leu-30 to Ser-159 the chain is Periplasmic. Heme-binding residues include His-130 and Tyr-134. Residues Glu-132–His-147 are compositionally biased toward basic and acidic residues. The interval Glu-132–Ser-159 is disordered.

The protein belongs to the CcmE/CycJ family.

The protein resides in the cell inner membrane. Heme chaperone required for the biogenesis of c-type cytochromes. Transiently binds heme delivered by CcmC and transfers the heme to apo-cytochromes in a process facilitated by CcmF and CcmH. The chain is Cytochrome c-type biogenesis protein CcmE from Escherichia coli (strain 55989 / EAEC).